The following is a 230-amino-acid chain: Cytidylate kinase (230 aa).

Gly16 to Thr24 contacts ATP.

The protein belongs to the cytidylate kinase family. Type 1 subfamily.

The protein resides in the cytoplasm. It catalyses the reaction CMP + ATP = CDP + ADP. The enzyme catalyses dCMP + ATP = dCDP + ADP. This is Cytidylate kinase from Lactobacillus gasseri (strain ATCC 33323 / DSM 20243 / BCRC 14619 / CIP 102991 / JCM 1131 / KCTC 3163 / NCIMB 11718 / NCTC 13722 / AM63).